Here is a 311-residue protein sequence, read N- to C-terminus: 4-diphosphocytidyl-2-C-methyl-D-erythritol kinase (311 aa).

Lys16 is an active-site residue. An ATP-binding site is contributed by 100–110 (PIGAGLAGGSS). The active site involves Asp142.

The protein belongs to the GHMP kinase family. IspE subfamily.

It catalyses the reaction 4-CDP-2-C-methyl-D-erythritol + ATP = 4-CDP-2-C-methyl-D-erythritol 2-phosphate + ADP + H(+). The protein operates within isoprenoid biosynthesis; isopentenyl diphosphate biosynthesis via DXP pathway; isopentenyl diphosphate from 1-deoxy-D-xylulose 5-phosphate: step 3/6. Catalyzes the phosphorylation of the position 2 hydroxy group of 4-diphosphocytidyl-2C-methyl-D-erythritol. The sequence is that of 4-diphosphocytidyl-2-C-methyl-D-erythritol kinase from Prochlorococcus marinus (strain AS9601).